Reading from the N-terminus, the 1577-residue chain is Pentafunctional AROM polypeptide (1577 aa).

The 3-dehydroquinate synthase stretch occupies residues methionine 1–asparagine 384. NAD(+) is bound by residues aspartate 48 to asparagine 50, glutamate 85 to lysine 88, glycine 116 to valine 118, and aspartate 121. Arginine 132 provides a ligand contact to 7-phospho-2-dehydro-3-deoxy-D-arabino-heptonate. Threonine 141–threonine 142 contacts NAD(+). Positions 148 and 154 each coordinate 7-phospho-2-dehydro-3-deoxy-D-arabino-heptonate. Lysine 163 is an NAD(+) binding site. Asparagine 164 provides a ligand contact to 7-phospho-2-dehydro-3-deoxy-D-arabino-heptonate. NAD(+) contacts are provided by residues phenylalanine 181–threonine 184 and asparagine 192. Glutamate 196 is a binding site for Zn(2+). Residues glutamate 196–lysine 199 and lysine 250 each bind 7-phospho-2-dehydro-3-deoxy-D-arabino-heptonate. The active-site Proton acceptor; for 3-dehydroquinate synthase activity is the glutamate 260. Residues arginine 264–asparagine 268 and histidine 271 each bind 7-phospho-2-dehydro-3-deoxy-D-arabino-heptonate. Zn(2+) is bound at residue histidine 271. Histidine 275 serves as the catalytic Proton acceptor; for 3-dehydroquinate synthase activity. Residues histidine 287 and lysine 356 each coordinate 7-phospho-2-dehydro-3-deoxy-D-arabino-heptonate. Histidine 287 serves as a coordination point for Zn(2+). The segment at valine 397–valine 842 is EPSP synthase. The For EPSP synthase activity role is filled by cysteine 824. The shikimate kinase stretch occupies residues asparagine 864–serine 1056. Glycine 871–threonine 878 contacts ATP. The tract at residues leucine 1057 to glutamate 1277 is 3-dehydroquinase. Histidine 1180 functions as the Proton acceptor; for 3-dehydroquinate dehydratase activity in the catalytic mechanism. The Schiff-base intermediate with substrate; for 3-dehydroquinate dehydratase activity role is filled by lysine 1208. Residues alanine 1290–lysine 1577 form a shikimate dehydrogenase region.

This sequence in the N-terminal section; belongs to the sugar phosphate cyclases superfamily. Dehydroquinate synthase family. It in the 2nd section; belongs to the EPSP synthase family. In the 3rd section; belongs to the shikimate kinase family. The protein in the 4th section; belongs to the type-I 3-dehydroquinase family. This sequence in the C-terminal section; belongs to the shikimate dehydrogenase family. As to quaternary structure, homodimer. It depends on Zn(2+) as a cofactor.

The protein localises to the cytoplasm. It catalyses the reaction 7-phospho-2-dehydro-3-deoxy-D-arabino-heptonate = 3-dehydroquinate + phosphate. It carries out the reaction 3-dehydroquinate = 3-dehydroshikimate + H2O. The enzyme catalyses shikimate + NADP(+) = 3-dehydroshikimate + NADPH + H(+). The catalysed reaction is shikimate + ATP = 3-phosphoshikimate + ADP + H(+). It catalyses the reaction 3-phosphoshikimate + phosphoenolpyruvate = 5-O-(1-carboxyvinyl)-3-phosphoshikimate + phosphate. The protein operates within metabolic intermediate biosynthesis; chorismate biosynthesis; chorismate from D-erythrose 4-phosphate and phosphoenolpyruvate: step 2/7. Its pathway is metabolic intermediate biosynthesis; chorismate biosynthesis; chorismate from D-erythrose 4-phosphate and phosphoenolpyruvate: step 3/7. It functions in the pathway metabolic intermediate biosynthesis; chorismate biosynthesis; chorismate from D-erythrose 4-phosphate and phosphoenolpyruvate: step 4/7. It participates in metabolic intermediate biosynthesis; chorismate biosynthesis; chorismate from D-erythrose 4-phosphate and phosphoenolpyruvate: step 5/7. The protein operates within metabolic intermediate biosynthesis; chorismate biosynthesis; chorismate from D-erythrose 4-phosphate and phosphoenolpyruvate: step 6/7. Functionally, the AROM polypeptide catalyzes 5 consecutive enzymatic reactions in prechorismate polyaromatic amino acid biosynthesis. This is Pentafunctional AROM polypeptide from Talaromyces stipitatus (strain ATCC 10500 / CBS 375.48 / QM 6759 / NRRL 1006) (Penicillium stipitatum).